The following is a 111-amino-acid chain: Kalata-B7 (111 aa).

An N-terminal signal peptide occupies residues 1–28 (MAKFTNCLALCLLLAAVVGAFGVELSEA). Positions 29-75 (DKSAVVNEIAEKMALQEMLDGVDKLFLRKMKSSETTLTMFLKEMQLK) are excised as a propeptide. A cross-link (cyclopeptide (Gly-Asn)) is located at residues 76–104 (GLPVCGETCTLGTCYTQGCTCSWPICKRN). Intrachain disulfides connect Cys-80/Cys-94, Cys-84/Cys-96, and Cys-89/Cys-101. The propeptide occupies 105–111 (GLPDVAA).

In terms of processing, kalata-B7 is a cyclic peptide.

Probably participates in a plant defense mechanism. Has hemolytic activity. This chain is Kalata-B7 (OAK3), found in Oldenlandia affinis.